The sequence spans 286 residues: Thiamine-monophosphate kinase (286 aa).

Residues aspartate 22, serine 36, threonine 37, and aspartate 38 each contribute to the Mg(2+) site. Aspartate 45 contacts substrate. Residues aspartate 66 and aspartate 111 each contribute to the Mg(2+) site. ATP contacts are provided by residues 110-111 (GD) and arginine 136. Residue aspartate 191 coordinates Mg(2+). Serine 193 is a binding site for ATP. Aspartate 194 is a binding site for Mg(2+). Tyrosine 282 is a substrate binding site.

The protein belongs to the thiamine-monophosphate kinase family.

It catalyses the reaction thiamine phosphate + ATP = thiamine diphosphate + ADP. It participates in cofactor biosynthesis; thiamine diphosphate biosynthesis; thiamine diphosphate from thiamine phosphate: step 1/1. Its function is as follows. Catalyzes the ATP-dependent phosphorylation of thiamine-monophosphate (TMP) to form thiamine-pyrophosphate (TPP), the active form of vitamin B1. The sequence is that of Thiamine-monophosphate kinase from Methanospirillum hungatei JF-1 (strain ATCC 27890 / DSM 864 / NBRC 100397 / JF-1).